We begin with the raw amino-acid sequence, 505 residues long: Betaine aldehyde dehydrogenase 1 (505 aa).

Trp163–Trp172 is a binding site for betaine aldehyde. Position 240–245 (Gly240–Gly245) interacts with NAD(+). Residues Glu262, Gln294 to Ser297, and Cys455 each bind betaine aldehyde. Residues Glu262 and Cys296 contribute to the active site. 4-aminobutanal contacts are provided by residues Glu262–Leu263 and Cys296. Trp461 serves as a coordination point for 4-aminobutanal. The short motif at Ser503–Leu505 is the Microbody targeting signal element.

It belongs to the aldehyde dehydrogenase family. In terms of assembly, homodimer.

The protein localises to the peroxisome. It carries out the reaction betaine aldehyde + NAD(+) + H2O = glycine betaine + NADH + 2 H(+). The protein operates within amine and polyamine biosynthesis; betaine biosynthesis via choline pathway; betaine from betaine aldehyde: step 1/1. In terms of biological role, dehydrogenase that can use N-acetyl-gamma-aminobutyraldehyde (NAGABald), gamma-guanidinobutyraldehyde (GGBald), betaine aldehyde (Bet-ald), gamma-aminobutyraldehyde (GAB-ald), acetaldehyde, 4-aminobutylaldehyde (AB-ald), 3-aminopropionaldehyde (AP-ald), 4-N-trimethylaminobutyraldehyde (TMAB-ald) and 3-N-trimethylaminopropionaldehyde (TMAP-ald) as substrates. Catalyzes the oxidation of GAB-ald more efficiently than Bet-ald. May convert acetaldehyde into acetate, thus facilitating the production of acetyl-CoA in peroxisomes under anaerobic conditions. The chain is Betaine aldehyde dehydrogenase 1 (BADH1) from Oryza sativa subsp. japonica (Rice).